A 939-amino-acid polypeptide reads, in one-letter code: Valine--tRNA ligase (939 aa).

Residues 47–57 (PNVTGILHMGH) carry the 'HIGH' region motif. The 'KMSKS' region signature appears at 563–567 (KLSKS). Position 566 (Lys566) interacts with ATP. Positions 874–939 (EHLAKERVRL…QSILDKLASL (66 aa)) form a coiled coil.

Belongs to the class-I aminoacyl-tRNA synthetase family. ValS type 1 subfamily. In terms of assembly, monomer.

It localises to the cytoplasm. The catalysed reaction is tRNA(Val) + L-valine + ATP = L-valyl-tRNA(Val) + AMP + diphosphate. In terms of biological role, catalyzes the attachment of valine to tRNA(Val). As ValRS can inadvertently accommodate and process structurally similar amino acids such as threonine, to avoid such errors, it has a 'posttransfer' editing activity that hydrolyzes mischarged Thr-tRNA(Val) in a tRNA-dependent manner. This Chlamydia trachomatis serovar A (strain ATCC VR-571B / DSM 19440 / HAR-13) protein is Valine--tRNA ligase.